We begin with the raw amino-acid sequence, 247 residues long: UDP-2,3-diacylglucosamine hydrolase (247 aa).

Mn(2+) contacts are provided by Asp8, His10, Asp41, Asn79, and His114. Position 79-80 (79-80 (NR)) interacts with substrate. Asp122, Ser160, Asp171, Gln174, and His202 together coordinate substrate. The Mn(2+) site is built by His202 and His204.

Belongs to the LpxH family. The cofactor is Mn(2+).

The protein resides in the cell inner membrane. The enzyme catalyses UDP-2-N,3-O-bis[(3R)-3-hydroxytetradecanoyl]-alpha-D-glucosamine + H2O = 2-N,3-O-bis[(3R)-3-hydroxytetradecanoyl]-alpha-D-glucosaminyl 1-phosphate + UMP + 2 H(+). The protein operates within glycolipid biosynthesis; lipid IV(A) biosynthesis; lipid IV(A) from (3R)-3-hydroxytetradecanoyl-[acyl-carrier-protein] and UDP-N-acetyl-alpha-D-glucosamine: step 4/6. Its function is as follows. Hydrolyzes the pyrophosphate bond of UDP-2,3-diacylglucosamine to yield 2,3-diacylglucosamine 1-phosphate (lipid X) and UMP by catalyzing the attack of water at the alpha-P atom. Involved in the biosynthesis of lipid A, a phosphorylated glycolipid that anchors the lipopolysaccharide to the outer membrane of the cell. In Xanthomonas campestris pv. campestris (strain B100), this protein is UDP-2,3-diacylglucosamine hydrolase.